Consider the following 247-residue polypeptide: 5-oxoprolinase subunit A (247 aa).

The protein belongs to the LamB/PxpA family. Forms a complex composed of PxpA, PxpB and PxpC.

The enzyme catalyses 5-oxo-L-proline + ATP + 2 H2O = L-glutamate + ADP + phosphate + H(+). Catalyzes the cleavage of 5-oxoproline to form L-glutamate coupled to the hydrolysis of ATP to ADP and inorganic phosphate. In Vibrio vulnificus (strain YJ016), this protein is 5-oxoprolinase subunit A.